A 169-amino-acid polypeptide reads, in one-letter code: ALK and LTK ligand 2a (169 aa).

A signal peptide spans 1-25 (MRALRAPVLVMGLVLLICTAAQSDA). The tract at residues 45-68 (ENSADDESAQKTESAPEPKDTHHL) is disordered. The segment covering 52-67 (SAQKTESAPEPKDTHH) has biased composition (basic and acidic residues). 2 disulfides stabilise this stretch: cysteine 130-cysteine 166 and cysteine 144-cysteine 153.

Belongs to the ALKAL family. As to quaternary structure, homodimer. In terms of tissue distribution, expressed at high level in the notochord and iridophore stripes of the trunk, as well as in the eye and swim bladder.

It localises to the secreted. The protein resides in the cell membrane. Cytokine that acts as a physiological ligand for receptor tyrosine kinases LTK and ALK. Required for neural crest cell differentiation and iridophore development during embryonic iridophore development and adult stripe development by acting as a receptor for LTK. This chain is ALK and LTK ligand 2a, found in Danio rerio (Zebrafish).